A 72-amino-acid polypeptide reads, in one-letter code: MVPLKISTLESQLQPLVKLVATETPGALVAYARGLSSADRSRLYRLLRSLEQAIPKLSSAVVSATTLAARGL.

Its subcellular location is the virion membrane. The sequence is that of Protein P13 (P13) from Pseudomonas phage phi6 (Bacteriophage phi-6).